We begin with the raw amino-acid sequence, 129 residues long: Small ribosomal subunit protein uS11 (129 aa).

It belongs to the universal ribosomal protein uS11 family. As to quaternary structure, part of the 30S ribosomal subunit.

Functionally, located on the platform of the 30S subunit. The sequence is that of Small ribosomal subunit protein uS11 from Haloarcula marismortui (strain ATCC 43049 / DSM 3752 / JCM 8966 / VKM B-1809) (Halobacterium marismortui).